Consider the following 144-residue polypeptide: 3-hydroxyacyl-[acyl-carrier-protein] dehydratase FabZ (144 aa).

His-48 is an active-site residue.

The protein belongs to the thioester dehydratase family. FabZ subfamily.

Its subcellular location is the cytoplasm. It catalyses the reaction a (3R)-hydroxyacyl-[ACP] = a (2E)-enoyl-[ACP] + H2O. In terms of biological role, involved in unsaturated fatty acids biosynthesis. Catalyzes the dehydration of short chain beta-hydroxyacyl-ACPs and long chain saturated and unsaturated beta-hydroxyacyl-ACPs. This Bacillus pumilus (strain SAFR-032) protein is 3-hydroxyacyl-[acyl-carrier-protein] dehydratase FabZ.